The chain runs to 180 residues: UPF0149 protein XC_0904 (180 aa).

It belongs to the UPF0149 family.

This Xanthomonas campestris pv. campestris (strain 8004) protein is UPF0149 protein XC_0904.